The following is a 349-amino-acid chain: Succinylglutamate desuccinylase (349 aa).

The Zn(2+) site is built by His-70, Glu-73, and His-166. Glu-229 is a catalytic residue.

This sequence belongs to the AspA/AstE family. Succinylglutamate desuccinylase subfamily. Requires Zn(2+) as cofactor.

It catalyses the reaction N-succinyl-L-glutamate + H2O = L-glutamate + succinate. The protein operates within amino-acid degradation; L-arginine degradation via AST pathway; L-glutamate and succinate from L-arginine: step 5/5. Transforms N(2)-succinylglutamate into succinate and glutamate. In Burkholderia thailandensis (strain ATCC 700388 / DSM 13276 / CCUG 48851 / CIP 106301 / E264), this protein is Succinylglutamate desuccinylase.